Reading from the N-terminus, the 403-residue chain is TBC1 domain family member 20 (403 aa).

The interval M1–F25 is disordered. The Rab-GAP TBC domain occupies L60–H246. 2 helical membrane passes run L238–V258 and F367–V387.

In terms of assembly, (Microbial infection) Directly interacts with the N-terminal amphipathic helix of hepatitis C virus (HCV) NS5A.

The protein resides in the membrane. GTPase-activating protein (GAP) specific for Rab1 and Rab2 small GTPase families for which it can accelerate the intrinsic GTP hydrolysis rate by more than five orders of magnitude. Also shows GAP activity for RAB18 GTPase. Promotes RAB18 dissociation from the endoplasmic reticulum (ER) membrane into the cytosol, probably through stimulating RAB18 GTP-hydrolysis. Involved in maintaining endoplasmic reticulum structure. In Homo sapiens (Human), this protein is TBC1 domain family member 20.